Reading from the N-terminus, the 502-residue chain is Keratin-associated protein 16-1 (502 aa).

15 tandem repeats follow at residues 4–8, 58–62, 73–77, 93–97, 108–112, 113–117, 133–137, 152–156, 177–181, 187–191, 212–216, 222–226, 272–276, 292–296, and 347–351. Residues 73 to 307 are 15 X 5 AA repeats of C-C-X(3); that stretch reads CCEATICEPS…CQPVCPEPSP (235 aa). The tract at residues 435-502 is disordered; that stretch reads RQPCTDSDND…QPAASKPADR (68 aa). The segment covering 489–502 has biased composition (low complexity); that stretch reads AAAPQPAASKPADR.

It belongs to the KRTAP type 16 family. Interacts with hair keratins.

In the hair cortex, hair keratin intermediate filaments are embedded in an interfilamentous matrix, consisting of hair keratin-associated proteins (KRTAP), which are essential for the formation of a rigid and resistant hair shaft through their extensive disulfide bond cross-linking with abundant cysteine residues of hair keratins. The matrix proteins include the high-sulfur and high-glycine-tyrosine keratins. In Mus musculus (Mouse), this protein is Keratin-associated protein 16-1 (Krtap16-1).